The following is a 631-amino-acid chain: tRNA uridine 5-carboxymethylaminomethyl modification enzyme MnmG (631 aa).

15 to 20 (GAGHAG) provides a ligand contact to FAD. Positions 214 to 233 (YSKTEEEPGDKEPRHFSFTS) are disordered. 276 to 290 (GPRYCPSIETKVVRF) serves as a coordination point for NAD(+).

It belongs to the MnmG family. Homodimer. Heterotetramer of two MnmE and two MnmG subunits. The cofactor is FAD.

It localises to the cytoplasm. NAD-binding protein involved in the addition of a carboxymethylaminomethyl (cmnm) group at the wobble position (U34) of certain tRNAs, forming tRNA-cmnm(5)s(2)U34. The polypeptide is tRNA uridine 5-carboxymethylaminomethyl modification enzyme MnmG (Lactobacillus delbrueckii subsp. bulgaricus (strain ATCC BAA-365 / Lb-18)).